The primary structure comprises 249 residues: AA9 family lytic polysaccharide monooxygenase A (249 aa).

The first 21 residues, 1-21 (MALSKIAALSTILASASLVAG), serve as a signal peptide directing secretion. Residue His22 participates in Cu(2+) binding. Residue His22 is modified to Methylhistidine. Residues Asn34 and Asn80 are each glycosylated (N-linked (GlcNAc...) asparagine). 2 disulfide bridges follow: Cys77–Cys199 and Cys118–Cys122. A Cu(2+)-binding site is contributed by His107. The O2 site is built by His185 and Gln194. Tyr196 is a Cu(2+) binding site.

It belongs to the polysaccharide monooxygenase AA9 family. It depends on Cu(2+) as a cofactor. The catalytically essential N-terminal histidine His-22 is post-translationally modified by methylation to prevent protonation of the histidine side chain, and protect the critical active site of the enzyme from oxidative damage.

Its subcellular location is the secreted. The catalysed reaction is [(1-&gt;4)-beta-D-glucosyl]n+m + reduced acceptor + O2 = 4-dehydro-beta-D-glucosyl-[(1-&gt;4)-beta-D-glucosyl]n-1 + [(1-&gt;4)-beta-D-glucosyl]m + acceptor + H2O.. Its function is as follows. Lytic polysaccharide monooxygenase (LPMO) that exhibits a mixed C1/C4 oxidative cleavage activity on cellulose and xyloglucan. Catalysis by LPMOs requires the reduction of the active-site copper from Cu(II) to Cu(I) by a reducing agent and H(2)O(2) or O(2) as a cosubstrate. Shows a higher boosting effect with cellulases on the enzymatic saccharification of complex lignocellulosic substrates associated with xyloglucan than on the lignocellulosic substrates without xyloglucan. The oxidative cleavage of xyloglucan by LPMO9A may facilitate to open up the sterical hindrance of cellulose by xyloglucan and thereby increase accessibility for cellulase to lignocellulosic substrates. In Penicillium parvum (Eupenicillium parvum), this protein is AA9 family lytic polysaccharide monooxygenase A.